The following is a 144-amino-acid chain: Endoribonuclease YbeY (144 aa).

His108, His112, and His118 together coordinate Zn(2+).

This sequence belongs to the endoribonuclease YbeY family. Zn(2+) serves as cofactor.

The protein localises to the cytoplasm. Its function is as follows. Single strand-specific metallo-endoribonuclease involved in late-stage 70S ribosome quality control and in maturation of the 3' terminus of the 16S rRNA. The protein is Endoribonuclease YbeY of Phytoplasma australiense.